Reading from the N-terminus, the 478-residue chain is Divinyl ether synthase CYP74D3 (478 aa).

A heme-binding site is contributed by cysteine 432.

This sequence belongs to the cytochrome P450 family. 9-divinyl ether synthase subfamily. Not detected in leaves, stems or roots of healthy plants.

It localises to the cytoplasm. The protein resides in the cytosol. The catalysed reaction is (9S)-hydroperoxy-(10E,12Z)-octadecadienoate = colneleate + H2O. The enzyme catalyses (9S)-hydroperoxy-(10E,12Z,15Z)-octadecatrienoate = colnelenate + H2O. In terms of biological role, strictly inducible cytochrome P450 involved in the biosynthesis of the anti-fungal toxins colneleate and colnelenate. Can use (9S)-hydroperoxy-(10E,12Z)-octadecadienoate (9-HPOD) and (9S)-hydroperoxy-(10E,12Z,15Z)-octadecatrienoate (9-HPOT) as substrates, but has a very low activity with the corresponding 13-hydroperoxides (13-HPOD and 13-POT). In Nicotiana tabacum (Common tobacco), this protein is Divinyl ether synthase CYP74D3.